Here is a 528-residue protein sequence, read N- to C-terminus: Tyrosine--tRNA ligase, cytoplasmic (528 aa).

M1 is modified (N-acetylmethionine). G2 is modified (N-acetylglycine; in Tyrosine--tRNA ligase, cytoplasmic, N-terminally processed). Residue Y39 coordinates L-tyrosine. Y39 provides a ligand contact to trans-resveratrol. The 'HIGH' region motif lies at 44–52 (TTGKPHVAY). L-tyrosine-binding residues include Y166, Q170, D173, and Q188. Residues Q170 and D173 each contribute to the trans-resveratrol site. K197 carries the N6-acetyllysine modification. Phosphoserine is present on S205. Residue K206 is modified to N6-acetyllysine. Residues 222–226 (KMSSS) carry the 'KMSKS' region motif. A Nuclear localization signal motif is present at residues 242-247 (KKKLKK). The disordered stretch occupies residues 339-363 (AAYPDPSKQKPMAKGPAKNSEPEEV). Residues 364 to 468 (IPSRLDIRVG…AGSAPGERVF (105 aa)) enclose the tRNA-binding domain. A Phosphoserine modification is found at S386. K474, K482, and K490 each carry N6-acetyllysine.

This sequence belongs to the class-I aminoacyl-tRNA synthetase family. In terms of assembly, homodimer. Interacts (when binding to resveratrol) with PARP1; interaction stimulates the poly-ADP-ribosyltransferase activity of PARP1.

The protein resides in the cytoplasm. It localises to the nucleus. The catalysed reaction is tRNA(Tyr) + L-tyrosine + ATP = L-tyrosyl-tRNA(Tyr) + AMP + diphosphate + H(+). With respect to regulation, resveratrol strongly inhibits the tyrosine--tRNA ligase activity. In terms of biological role, tyrosine--tRNA ligase that catalyzes the attachment of tyrosine to tRNA(Tyr) in a two-step reaction: tyrosine is first activated by ATP to form Tyr-AMP and then transferred to the acceptor end of tRNA(Tyr). Also acts as a positive regulator of poly-ADP-ribosylation in the nucleus, independently of its tyrosine--tRNA ligase activity. Activity is switched upon resveratrol-binding: resveratrol strongly inhibits the tyrosine--tRNA ligase activity and promotes relocalization to the nucleus, where YARS1 specifically stimulates the poly-ADP-ribosyltransferase activity of PARP1. This is Tyrosine--tRNA ligase, cytoplasmic (YARS1) from Pongo abelii (Sumatran orangutan).